A 224-amino-acid chain; its full sequence is Zinc finger C4H2 domain-containing protein (224 aa).

Residues 12 to 97 (ENIKEIRNKT…NKLLESTRRL (86 aa)) are a coiled coil. 2 disordered regions span residues 166-185 (QAAR…QPPP) and 204-224 (PLCK…KPDE). The C4H2-type zinc finger occupies 189–206 (CLSCHQQIHRNAPICPLC). A compositionally biased stretch (basic residues) spans 208–224 (AKSRSRNPKKPKRKPDE).

Its subcellular location is the nucleus. It localises to the cytoplasm. The protein localises to the postsynaptic cell membrane. Functionally, plays a role in GABAergic and V2 interneurons differentiation. Involved in motoneuron development and in neuromuscular junction formation. This Danio rerio (Zebrafish) protein is Zinc finger C4H2 domain-containing protein (zc4h2).